We begin with the raw amino-acid sequence, 81 residues long: Putative membrane protein insertion efficiency factor (81 aa).

Positions 59–81 are disordered; that stretch reads PWNPGGYDPVPPIKTSRSSSMAE.

It belongs to the UPF0161 family.

Its subcellular location is the cell inner membrane. In terms of biological role, could be involved in insertion of integral membrane proteins into the membrane. In Azotobacter vinelandii (strain DJ / ATCC BAA-1303), this protein is Putative membrane protein insertion efficiency factor.